The primary structure comprises 216 residues: 3-keto-L-gulonate-6-phosphate decarboxylase UlaD (216 aa).

D11 lines the substrate pocket. Mg(2+) contacts are provided by E33 and D62. A substrate-binding site is contributed by R192.

The protein belongs to the HPS/KGPDC family. KGPDC subfamily. Homodimer. It depends on Mg(2+) as a cofactor.

The enzyme catalyses 3-dehydro-L-gulonate 6-phosphate + H(+) = L-xylulose 5-phosphate + CO2. The protein operates within cofactor degradation; L-ascorbate degradation; D-xylulose 5-phosphate from L-ascorbate: step 2/4. In terms of biological role, catalyzes the decarboxylation of 3-keto-L-gulonate-6-P into L-xylulose-5-P. Is involved in the anaerobic L-ascorbate utilization. This chain is 3-keto-L-gulonate-6-phosphate decarboxylase UlaD, found in Salmonella typhi.